Reading from the N-terminus, the 88-residue chain is Small ribosomal subunit protein uS15c (88 aa).

This sequence belongs to the universal ribosomal protein uS15 family. In terms of assembly, part of the 30S ribosomal subunit.

It localises to the plastid. The protein localises to the chloroplast. This Capsella bursa-pastoris (Shepherd's purse) protein is Small ribosomal subunit protein uS15c (rps15).